Reading from the N-terminus, the 376-residue chain is Queuine tRNA-ribosyltransferase (376 aa).

D93 serves as the catalytic Proton acceptor. Substrate-binding positions include 93–97 (DSGGF), D147, Q190, and G217. Residues 248-254 (GVGKPGD) form an RNA binding region. D267 serves as the catalytic Nucleophile. Zn(2+) contacts are provided by C305, C307, C310, and H336.

It belongs to the queuine tRNA-ribosyltransferase family. Homodimer. Within each dimer, one monomer is responsible for RNA recognition and catalysis, while the other monomer binds to the replacement base PreQ1. The cofactor is Zn(2+).

The enzyme catalyses 7-aminomethyl-7-carbaguanine + guanosine(34) in tRNA = 7-aminomethyl-7-carbaguanosine(34) in tRNA + guanine. Its pathway is tRNA modification; tRNA-queuosine biosynthesis. Catalyzes the base-exchange of a guanine (G) residue with the queuine precursor 7-aminomethyl-7-deazaguanine (PreQ1) at position 34 (anticodon wobble position) in tRNAs with GU(N) anticodons (tRNA-Asp, -Asn, -His and -Tyr). Catalysis occurs through a double-displacement mechanism. The nucleophile active site attacks the C1' of nucleotide 34 to detach the guanine base from the RNA, forming a covalent enzyme-RNA intermediate. The proton acceptor active site deprotonates the incoming PreQ1, allowing a nucleophilic attack on the C1' of the ribose to form the product. After dissociation, two additional enzymatic reactions on the tRNA convert PreQ1 to queuine (Q), resulting in the hypermodified nucleoside queuosine (7-(((4,5-cis-dihydroxy-2-cyclopenten-1-yl)amino)methyl)-7-deazaguanosine). This is Queuine tRNA-ribosyltransferase from Dinoroseobacter shibae (strain DSM 16493 / NCIMB 14021 / DFL 12).